The following is a 650-amino-acid chain: ATP-dependent DNA helicase PIF1 (650 aa).

The interval 14-192 (MPSSTEAATD…ALEKRPMESQ (179 aa)) is PINT. 2 positions are modified to phosphoserine: S40 and S164. Residues 171 to 199 (LQRAAATKAPDSALEKRPMESQTSTEAPR) form a disordered region. Residue 237 to 244 (GSAGTGKS) participates in ATP binding. The DNA-binding element occupies 586-605 (QAYVALSRARSLQGLRVLDF). Positions 631–650 (LESQDDEEANSDLENMDPNL) are disordered. Over residues 633–650 (SQDDEEANSDLENMDPNL) the composition is skewed to acidic residues.

Belongs to the helicase family. PIF1 subfamily. Monomer. Interacts with telomerase. The cofactor is Mg(2+).

The protein localises to the nucleus. The protein resides in the mitochondrion. It carries out the reaction Couples ATP hydrolysis with the unwinding of duplex DNA at the replication fork by translocating in the 5'-3' direction. This creates two antiparallel DNA single strands (ssDNA). The leading ssDNA polymer is the template for DNA polymerase III holoenzyme which synthesizes a continuous strand.. It catalyses the reaction ATP + H2O = ADP + phosphate + H(+). In terms of biological role, DNA-dependent ATPase and 5'-3' DNA helicase required for the maintenance of both mitochondrial and nuclear genome stability. Efficiently unwinds G-quadruplex (G4) DNA structures and forked RNA-DNA hybrids. Resolves G4 structures, preventing replication pausing and double-strand breaks (DSBs) at G4 motifs. Involved in the maintenance of telomeric DNA. Inhibits telomere elongation, de novo telomere formation and telomere addition to DSBs via catalytic inhibition of telomerase. Reduces the processivity of telomerase by displacing active telomerase from DNA ends. Releases telomerase by unwinding the short telomerase RNA/telomeric DNA hybrid that is the intermediate in the telomerase reaction. Possesses an intrinsic strand annealing activity. The sequence is that of ATP-dependent DNA helicase PIF1 from Mus musculus (Mouse).